The primary structure comprises 436 residues: Antilisterial bacteriocin subtilosin biosynthesis protein AlbD (436 aa).

Helical transmembrane passes span 27–47, 51–71, 112–132, 134–154, 166–186, 187–207, 240–260, 270–290, 315–335, and 395–415; these read IAAG…QAGI, VLGK…MVFL, TLFF…SGAQ, LFWL…GVML, FLLH…MPAV, TIPL…PVFL, AMLL…FQMM, IYIV…LYSI, FYSG…GFIS, and ATLA…LIIV.

It localises to the cell membrane. In terms of biological role, involved in the production of the bacteriocin subtilosin. Required for immunity to subtilosin. This Bacillus subtilis protein is Antilisterial bacteriocin subtilosin biosynthesis protein AlbD (albD).